An 875-amino-acid polypeptide reads, in one-letter code: Alanine--tRNA ligase (875 aa).

The Zn(2+) site is built by H565, H569, C666, and H670.

Belongs to the class-II aminoacyl-tRNA synthetase family. Requires Zn(2+) as cofactor.

It is found in the cytoplasm. It catalyses the reaction tRNA(Ala) + L-alanine + ATP = L-alanyl-tRNA(Ala) + AMP + diphosphate. Catalyzes the attachment of alanine to tRNA(Ala) in a two-step reaction: alanine is first activated by ATP to form Ala-AMP and then transferred to the acceptor end of tRNA(Ala). Also edits incorrectly charged Ser-tRNA(Ala) and Gly-tRNA(Ala) via its editing domain. The protein is Alanine--tRNA ligase of Methylibium petroleiphilum (strain ATCC BAA-1232 / LMG 22953 / PM1).